The chain runs to 175 residues: Ribonuclease M5 (175 aa).

One can recognise a Toprim domain in the interval 3–83; it reads NEIIIVEGKS…DVDVFNAFVS (81 aa). Positions 9, 57, and 59 each coordinate Mg(2+).

The protein belongs to the ribonuclease M5 family. It depends on Mg(2+) as a cofactor.

It is found in the cytoplasm. The enzyme catalyses Endonucleolytic cleavage of RNA, removing 21 and 42 nucleotides, respectively, from the 5'- and 3'-termini of a 5S-rRNA precursor.. Functionally, required for correct processing of both the 5' and 3' ends of 5S rRNA precursor. Cleaves both sides of a double-stranded region yielding mature 5S rRNA in one step. The protein is Ribonuclease M5 of Mesoplasma florum (strain ATCC 33453 / NBRC 100688 / NCTC 11704 / L1) (Acholeplasma florum).